The sequence spans 387 residues: MTEFELPPKYITAANDLRSDTFTTPTAEMMEAALEASIGDAVYGEDVDTVRLEQTVARMAGKEAGLFCVSGTLSNQIAIRTHLMQPPYSILCDYRAHVYTHEAAGLAILSQAMVVPVVPSNGDYLTLEDIKSHYVPDDGDIHGAPTRLISLENTLHGIVYPLEELVRIKAWCMENGLKLHCDGARIWNAAAQSGVPLKQYGEIFDSISICLSKSMGAPIGSVLVGNLKFVKKATHFRKQQGGGIRQSGMMARMALVNINNDWKSQLLYSHSLAHELAEYCEAKGIPLESPADTNFVFINLKAARMDPDVLVKKGLKYNVKLMGGRVSFHYQVTRDTLEKVKLAISEAFDYAKEHPFDCNGPTQIYRSESTEVDVDGNAIREIKTYKY.

Lys213 carries the N6-(pyridoxal phosphate)lysine modification. A Glycyl lysine isopeptide (Lys-Gly) (interchain with G-Cter in ubiquitin) cross-link involves residue Lys228. Residues Ser367 and Ser369 each carry the phosphoserine modification. Thr370 carries the post-translational modification Phosphothreonine.

Belongs to the threonine aldolase family. In terms of assembly, homotetramer. Pyridoxal 5'-phosphate serves as cofactor.

It carries out the reaction L-threonine = acetaldehyde + glycine. It catalyses the reaction L-allo-threonine = acetaldehyde + glycine. It functions in the pathway amino-acid biosynthesis; glycine biosynthesis; glycine from L-allo-threonine: step 1/1. The protein operates within amino-acid degradation; L-threonine degradation via aldolase pathway; acetaldehyde and glycine from L-threonine: step 1/1. Its function is as follows. Catalyzes the cleavage of L-allo-threonine and L-threonine to glycine and acetaldehyde. The protein is Low specificity L-threonine aldolase (GLY1) of Saccharomyces cerevisiae (strain ATCC 204508 / S288c) (Baker's yeast).